The sequence spans 234 residues: Cytochrome b (234 aa).

A run of 4 helical transmembrane segments spans residues Phe33 to Met53, Trp77 to Val98, Trp113 to Leu133, and Phe178 to Leu198. Heme b contacts are provided by His83 and His97. 2 residues coordinate heme b: His182 and His196. His201 provides a ligand contact to a ubiquinone. Residues Ile226–Val234 traverse the membrane as a helical segment.

This sequence belongs to the cytochrome b family. As to quaternary structure, the cytochrome bc1 complex contains 11 subunits: 3 respiratory subunits (MT-CYB, CYC1 and UQCRFS1), 2 core proteins (UQCRC1 and UQCRC2) and 6 low-molecular weight proteins (UQCRH/QCR6, UQCRB/QCR7, UQCRQ/QCR8, UQCR10/QCR9, UQCR11/QCR10 and a cleavage product of UQCRFS1). This cytochrome bc1 complex then forms a dimer. Requires heme b as cofactor.

Its subcellular location is the mitochondrion inner membrane. In terms of biological role, component of the ubiquinol-cytochrome c reductase complex (complex III or cytochrome b-c1 complex) that is part of the mitochondrial respiratory chain. The b-c1 complex mediates electron transfer from ubiquinol to cytochrome c. Contributes to the generation of a proton gradient across the mitochondrial membrane that is then used for ATP synthesis. This is Cytochrome b (MT-CYB) from Lepus arcticus (Arctic hare).